Consider the following 365-residue polypeptide: Alanine racemase (365 aa).

K32 (proton acceptor; specific for D-alanine) is an active-site residue. K32 is subject to N6-(pyridoxal phosphate)lysine. R128 serves as a coordination point for substrate. The Proton acceptor; specific for L-alanine role is filled by Y257. M305 contacts substrate.

It belongs to the alanine racemase family. The cofactor is pyridoxal 5'-phosphate.

The catalysed reaction is L-alanine = D-alanine. It participates in amino-acid biosynthesis; D-alanine biosynthesis; D-alanine from L-alanine: step 1/1. Functionally, catalyzes the interconversion of L-alanine and D-alanine. May also act on other amino acids. The chain is Alanine racemase (alr) from Francisella tularensis subsp. holarctica (strain FTNF002-00 / FTA).